A 407-amino-acid polypeptide reads, in one-letter code: Arginine biosynthesis bifunctional protein ArgJ (407 aa).

The substrate site is built by threonine 157, lysine 183, threonine 194, glutamate 280, asparagine 402, and threonine 407. The active-site Nucleophile is threonine 194.

It belongs to the ArgJ family. In terms of assembly, heterotetramer of two alpha and two beta chains.

It localises to the cytoplasm. The enzyme catalyses N(2)-acetyl-L-ornithine + L-glutamate = N-acetyl-L-glutamate + L-ornithine. The catalysed reaction is L-glutamate + acetyl-CoA = N-acetyl-L-glutamate + CoA + H(+). Its pathway is amino-acid biosynthesis; L-arginine biosynthesis; L-ornithine and N-acetyl-L-glutamate from L-glutamate and N(2)-acetyl-L-ornithine (cyclic): step 1/1. The protein operates within amino-acid biosynthesis; L-arginine biosynthesis; N(2)-acetyl-L-ornithine from L-glutamate: step 1/4. Functionally, catalyzes two activities which are involved in the cyclic version of arginine biosynthesis: the synthesis of N-acetylglutamate from glutamate and acetyl-CoA as the acetyl donor, and of ornithine by transacetylation between N(2)-acetylornithine and glutamate. This is Arginine biosynthesis bifunctional protein ArgJ from Oceanobacillus iheyensis (strain DSM 14371 / CIP 107618 / JCM 11309 / KCTC 3954 / HTE831).